The following is an 87-amino-acid chain: DNA-directed RNA polymerase subunit omega (87 aa).

Belongs to the RNA polymerase subunit omega family. In terms of assembly, the RNAP catalytic core consists of 2 alpha, 1 beta, 1 beta' and 1 omega subunit. When a sigma factor is associated with the core the holoenzyme is formed, which can initiate transcription.

It catalyses the reaction RNA(n) + a ribonucleoside 5'-triphosphate = RNA(n+1) + diphosphate. In terms of biological role, promotes RNA polymerase assembly. Latches the N- and C-terminal regions of the beta' subunit thereby facilitating its interaction with the beta and alpha subunits. In Pseudomonas syringae pv. syringae (strain B728a), this protein is DNA-directed RNA polymerase subunit omega.